The chain runs to 185 residues: MAKQVIQQAKEKMDKAVQAFTRELASIRAGRANAGLLEKVTVDYYGVPTPINQLASISVPEARLLVIQPYDKSAIKEMEKAILASDLGLTPSNDGSVIRLVIPPLTEERRRELAKLVKKYSEDAKVAVRNIRRDANDELKKLEKNGEITEDELRSYTDEVQKLTDDHIAKIDAITKEKEKEVMEV.

Belongs to the RRF family.

The protein localises to the cytoplasm. Functionally, responsible for the release of ribosomes from messenger RNA at the termination of protein biosynthesis. May increase the efficiency of translation by recycling ribosomes from one round of translation to another. This chain is Ribosome-recycling factor, found in Geobacillus kaustophilus (strain HTA426).